The sequence spans 1049 residues: MSRFFIDRPIFAWVLAIVAMLAGALSLAKMPISQYPNIAAPAVSIQVSYPGASAQTVQDTVVQVIEQQLSGLDGFRYMSAESASDGSMTIIVTFEQGTDPDIAQVQVQNKLQLATPRLPEEVQRQGLRVVKYQMNFFLVMSLVDRSGKLDNFDLGNLIASQLQDPISRIPGVGDFQLFGSPYAMRIWLDPGKLNSYQLTPTDVASAIREQNVQVSSGQLGGLPTRSGVQLNATVLGKTRMTTPSQFDEILVKVNPDGSQVRVKDVGRAELGADSFAISAQYKDSPTASLALRLSTGGNLLETVDAVKKLMEQQKAYLPDGVEVIYPYDTTPVVEASIESVVHTIFEAVVLVFLVMYLFLQSFRATLIPTLAVPVVLLATFALLPYFGLNINVLTMYAMVLAIGLLVDDAIVVVENVERLMHDEGLSPLEATRKSMDQISGALVGIGMVLSAVFVPMAFFGGSAGIIYQQFAITIVVCMGLSILVALVFTPALCVTILKAPEGNSHHERKGFFGWFNRIFDRGTRRFERGVGAMLKGRGRYLLAFLLITGGTGYLFTQIPKAFLPNEDQGLMMIEVRTPANASAERTEGVLQEVRDYLANDEGALVEHFMTVNGFNFAGRGQNSGLVLITFKDWKERHGAGQDVFSIAQRANQHFAKIKDASVMAFVPPAILEMGNAMGFNLYLQDNLGLGHEALMAARNQFLQLASQNPKLQAVRPNGKDDEPQFQVNIDDEKARALQVSIASINETMSAAWGSMYVNDFIDRGRVKRVYVQGEDISRISPEDFDKWYVRNSLGQMVPFSAFATGEWVNGSPKLERYGGISSLNILGEPAPGYSTGDAMIAIAEIMQQLPAGIGLSYTGLSYEEIQTGDQAPLLYALTVLIVFLCLAALYESWSVPVSVIMVVPLGILGAVLATLWRDLTADVYFQVGLMTTVGLSAKNAILIVEFAKELYEKEGYPIVKAAIEAAKLRLRPILMTSLAFTFGVLPMAIASGAGAGSQHSIATGVVGGMITATVLAVFFVPLFYVVVVKLFEGLMKRKPNAVKEVTHEV.

12 helical membrane passes run 10–30, 339–359, 366–386, 392–412, 440–460, 470–490, 542–562, 871–891, 895–915, 927–947, 973–993, and 1008–1028; these read IFAW…LAKM, SVVH…YLFL, LIPT…LPYF, VLTM…AIVV, GALV…AFFG, FAIT…VFTP, LAFL…PKAF, APLL…ALYE, VPVS…LATL, VGLM…VEFA, ILMT…ASGA, and GMIT…VVVV.

Belongs to the resistance-nodulation-cell division (RND) (TC 2.A.6) family.

Its subcellular location is the cell inner membrane. Its function is as follows. The inner membrane transporter component of an organic solvent efflux pump. Involved in export of a number of low log POW compounds including hexane (log POW 3.5), toluene (log POW 2.5) and dimethylphthalate (log POW 2.3). The solvent resistance phenotype has been postulated to depend on the operon expression level. The protein is Solvent-resistant pump membrane transporter SrpB (srpB) of Pseudomonas putida (Arthrobacter siderocapsulatus).